The chain runs to 219 residues: Transmembrane protein 179B (219 aa).

Helical transmembrane passes span 6–26, 69–89, 105–125, and 167–187; these read PLLLELLLYGSCFICGIITAA, ISVCVAVFCFSLTLYWIYIAF, LGLSGVFLFFLLVTGCILKIG, and AETAVWVNFFFWMIIVVLVLI. Residues 195–219 form a disordered region; that stretch reads IRPGTEDPSAPPSETEPFFNRPGRP.

The protein belongs to the TMEM179 family.

The protein localises to the membrane. The chain is Transmembrane protein 179B (tmem179b) from Danio rerio (Zebrafish).